We begin with the raw amino-acid sequence, 700 residues long: Dipeptidyl aminopeptidase 1 (700 aa).

The first 27 residues, 1–27 (MAKRIFSVSFLLVLLNVLHICIKFSVA), serve as a signal peptide directing secretion. N-linked (GlcNAc...) asparagine glycans are attached at residues N52, N144, N265, N337, and N373. Residues 210-369 (DNVNEIKHLD…SPKRELEINE (160 aa)) constitute a propeptide that is removed on maturation. Intrachain disulfides connect C395/C446 and C439/C478. Residue C398 is part of the active site. T416 is subject to Sulfothreonine. Chloride is bound by residues F450 and Y452. N-linked (GlcNAc...) asparagine glycosylation is found at N481, N490, and N507. Y549 serves as a coordination point for chloride. N-linked (GlcNAc...) asparagine glycosylation occurs at N615. Catalysis depends on residues H624 and N648. N667 carries N-linked (GlcNAc...) asparagine glycosylation.

This sequence belongs to the peptidase C1 family. As to quaternary structure, monomer. The cofactor is chloride.

The protein resides in the vacuole lumen. Its subcellular location is the parasitophorous vacuole lumen. The catalysed reaction is Release of an N-terminal dipeptide, Xaa-Yaa-|-Zaa-, except when Xaa is Arg or Lys, or Yaa or Zaa is Pro.. Functionally, thiol protease that cleaves dipeptides from the N-terminus of protein substrates. Active against a broad range of dipeptide substrates composed of both polar and hydrophobic amino acids. Proline cannot occupy the P1 position and arginine or lysine cannot occupy the P2 position of the substrate. Involved in host hemoglobin degradation by generating dipeptides from hemoglobin-derived oligopeptides. The protein is Dipeptidyl aminopeptidase 1 of Plasmodium falciparum (isolate 3D7).